A 231-amino-acid polypeptide reads, in one-letter code: Cytidylate kinase (231 aa).

18-26 (GPSGTGKSS) lines the ATP pocket.

This sequence belongs to the cytidylate kinase family. Type 1 subfamily.

Its subcellular location is the cytoplasm. It carries out the reaction CMP + ATP = CDP + ADP. It catalyses the reaction dCMP + ATP = dCDP + ADP. The protein is Cytidylate kinase of Streptomyces griseus subsp. griseus (strain JCM 4626 / CBS 651.72 / NBRC 13350 / KCC S-0626 / ISP 5235).